A 212-amino-acid chain; its full sequence is Phosphatidylserine decarboxylase proenzyme (212 aa).

Ser182 acts as the Schiff-base intermediate with substrate; via pyruvic acid in catalysis. Ser182 carries the pyruvic acid (Ser); by autocatalysis modification.

This sequence belongs to the phosphatidylserine decarboxylase family. PSD-A subfamily. In terms of assembly, heterodimer of a large membrane-associated beta subunit and a small pyruvoyl-containing alpha subunit. Pyruvate serves as cofactor. Is synthesized initially as an inactive proenzyme. Formation of the active enzyme involves a self-maturation process in which the active site pyruvoyl group is generated from an internal serine residue via an autocatalytic post-translational modification. Two non-identical subunits are generated from the proenzyme in this reaction, and the pyruvate is formed at the N-terminus of the alpha chain, which is derived from the carboxyl end of the proenzyme. The post-translation cleavage follows an unusual pathway, termed non-hydrolytic serinolysis, in which the side chain hydroxyl group of the serine supplies its oxygen atom to form the C-terminus of the beta chain, while the remainder of the serine residue undergoes an oxidative deamination to produce ammonia and the pyruvoyl prosthetic group on the alpha chain.

The protein localises to the cell membrane. It carries out the reaction a 1,2-diacyl-sn-glycero-3-phospho-L-serine + H(+) = a 1,2-diacyl-sn-glycero-3-phosphoethanolamine + CO2. It participates in phospholipid metabolism; phosphatidylethanolamine biosynthesis; phosphatidylethanolamine from CDP-diacylglycerol: step 2/2. Functionally, catalyzes the formation of phosphatidylethanolamine (PtdEtn) from phosphatidylserine (PtdSer). This Chlorobium chlorochromatii (strain CaD3) protein is Phosphatidylserine decarboxylase proenzyme.